The sequence spans 986 residues: Resact receptor (986 aa).

The first 21 residues, methionine 1–serine 21, serve as a signal peptide directing secretion. Topologically, residues alanine 22–tyrosine 507 are extracellular. 3 N-linked (GlcNAc...) asparagine glycosylation sites follow: asparagine 185, asparagine 361, and asparagine 410. Residues leucine 508 to tyrosine 528 form a helical membrane-spanning segment. The Cytoplasmic portion of the chain corresponds to arginine 529–serine 986. Positions leucine 568–leucine 836 constitute a Protein kinase domain.

It localises to the membrane. It catalyses the reaction GTP = 3',5'-cyclic GMP + diphosphate. In terms of biological role, implicated as a cell-surface receptor on spermatozoa for 'resact' a chemotactic peptide, and on various other cells as a receptor for atrial natriuretic peptide. The polypeptide is Resact receptor (Arbacia punctulata (Punctuate sea urchin)).